We begin with the raw amino-acid sequence, 65 residues long: Large ribosomal subunit protein bL35 (65 aa).

The protein belongs to the bacterial ribosomal protein bL35 family.

This chain is Large ribosomal subunit protein bL35, found in Thermotoga petrophila (strain ATCC BAA-488 / DSM 13995 / JCM 10881 / RKU-1).